A 264-amino-acid chain; its full sequence is Thiazole synthase (264 aa).

Lysine 101 acts as the Schiff-base intermediate with DXP in catalysis. Residues glycine 162, alanine 188–glycine 189, and asparagine 210–threonine 211 contribute to the 1-deoxy-D-xylulose 5-phosphate site.

It belongs to the ThiG family. Homotetramer. Forms heterodimers with either ThiH or ThiS.

It is found in the cytoplasm. It carries out the reaction [ThiS sulfur-carrier protein]-C-terminal-Gly-aminoethanethioate + 2-iminoacetate + 1-deoxy-D-xylulose 5-phosphate = [ThiS sulfur-carrier protein]-C-terminal Gly-Gly + 2-[(2R,5Z)-2-carboxy-4-methylthiazol-5(2H)-ylidene]ethyl phosphate + 2 H2O + H(+). It participates in cofactor biosynthesis; thiamine diphosphate biosynthesis. Its function is as follows. Catalyzes the rearrangement of 1-deoxy-D-xylulose 5-phosphate (DXP) to produce the thiazole phosphate moiety of thiamine. Sulfur is provided by the thiocarboxylate moiety of the carrier protein ThiS. In vitro, sulfur can be provided by H(2)S. The chain is Thiazole synthase from Chromobacterium violaceum (strain ATCC 12472 / DSM 30191 / JCM 1249 / CCUG 213 / NBRC 12614 / NCIMB 9131 / NCTC 9757 / MK).